We begin with the raw amino-acid sequence, 85 residues long: F1845 adhesin operon regulatory protein (85 aa).

Regulates the transcription of genes involved in the biosynthesis of F1845 fimbrial adhesin. The chain is F1845 adhesin operon regulatory protein (daaA) from Escherichia coli.